A 598-amino-acid chain; its full sequence is Nuclear receptor subfamily 4 group A member 2 (598 aa).

The interval 1–22 is disordered; that stretch reads MPCVQAQYGSSPQGASPASQGY. Residues 7-18 show a composition bias toward polar residues; the sequence is QYGSSPQGASPA. The segment at residues 260–335 is a DNA-binding region (nuclear receptor); the sequence is EGLCAVCGDN…VGMVKEVVRT (76 aa). 2 consecutive NR C4-type zinc fingers follow at residues 263-283 and 299-318; these read CAVCGDNAACQHYGVRTCEGC and CLANKNCPVDKRRRNRCQYC. A Bipartite nuclear localization signal (NLS1) motif is present at residues 287–314; it reads FKRTVQKNAKYVCLANKNCPVDKRRRNR. Residues 337–361 are disordered; it reads SLKGRRGRLPSKPKSPQEPSPPSPP. Positions 338–350 match the Nuclear localization signal (NLS1) motif; that stretch reads LKGRRGRLPSKPK. Pro residues predominate over residues 352 to 361; the sequence is PQEPSPPSPP. The NR LBD domain maps to 360–595; sequence PPVSLISALV…AIIDKLFLDT (236 aa). The nuclear export sequence (NES1) signature appears at 443–452; it reads FLELFVLRLA. The short motif at 568-577 is the nuclear export sequence (NES2) element; the sequence is QGLQRIFYLK.

The protein belongs to the nuclear hormone receptor family. Interacts with SFPQ, NCOR2, SIN3A and HADC1. The interaction with NCOR2 increases in the absence of PITX3. Interacts with PER2.

The protein resides in the cytoplasm. It localises to the nucleus. Transcriptional regulator which is important for the differentiation and maintenance of meso-diencephalic dopaminergic (mdDA) neurons during development. It is crucial for expression of a set of genes such as SLC6A3, SLC18A2, TH and DRD2 which are essential for development of mdDA neurons. The chain is Nuclear receptor subfamily 4 group A member 2 (NR4A2) from Pongo abelii (Sumatran orangutan).